A 182-amino-acid polypeptide reads, in one-letter code: MDRKTLDDTSRFLSHVLRHQPEAIGLTLDGEGWADIDALIAGAARDGRALDRALLGAVLRSNDKQRFAFSADGQRIRAVQGHSHAAVAIAYAPAVPPAVLYHGTARRFLDSIREHGLVPGSRHHVHLSARRATALEVGRRYGSPVLLEVDARDMHLAGHLFHQAENGVWLAGQVPVRFIREA.

The protein belongs to the KptA/TPT1 family.

Functionally, removes the 2'-phosphate from RNA via an intermediate in which the phosphate is ADP-ribosylated by NAD followed by a presumed transesterification to release the RNA and generate ADP-ribose 1''-2''-cyclic phosphate (APPR&gt;P). May function as an ADP-ribosylase. This Pseudomonas paraeruginosa (strain DSM 24068 / PA7) (Pseudomonas aeruginosa (strain PA7)) protein is Probable RNA 2'-phosphotransferase.